A 105-amino-acid polypeptide reads, in one-letter code: T cell receptor alpha variable 40 (105 aa).

A signal peptide spans 1–19 (MNSSLDFLILILMFGGTSS). Residues 20-105 (NSVKQTGQIT…DSAVYYCLLG (86 aa)) form the Ig-like domain. The N-linked (GlcNAc...) asparagine glycan is linked to N39. C40 and C102 are oxidised to a cystine.

In terms of assembly, alpha-beta TR is a heterodimer composed of an alpha and beta chain; disulfide-linked. The alpha-beta TR is associated with the transmembrane signaling CD3 coreceptor proteins to form the TR-CD3 (TcR or TCR). The assembly of alpha-beta TR heterodimers with CD3 occurs in the endoplasmic reticulum where a single alpha-beta TR heterodimer associates with one CD3D-CD3E heterodimer, one CD3G-CD3E heterodimer and one CD247 homodimer forming a stable octameric structure. CD3D-CD3E and CD3G-CD3E heterodimers preferentially associate with TR alpha and TR beta chains, respectively. The association of the CD247 homodimer is the last step of TcR assembly in the endoplasmic reticulum and is required for transport to the cell surface.

Its subcellular location is the cell membrane. Its function is as follows. V region of the variable domain of T cell receptor (TR) alpha chain that participates in the antigen recognition. Alpha-beta T cell receptors are antigen specific receptors which are essential to the immune response and are present on the cell surface of T lymphocytes. Recognize peptide-major histocompatibility (MH) (pMH) complexes that are displayed by antigen presenting cells (APC), a prerequisite for efficient T cell adaptive immunity against pathogens. Binding of alpha-beta TR to pMH complex initiates TR-CD3 clustering on the cell surface and intracellular activation of LCK that phosphorylates the ITAM motifs of CD3G, CD3D, CD3E and CD247 enabling the recruitment of ZAP70. In turn ZAP70 phosphorylates LAT, which recruits numerous signaling molecules to form the LAT signalosome. The LAT signalosome propagates signal branching to three major signaling pathways, the calcium, the mitogen-activated protein kinase (MAPK) kinase and the nuclear factor NF-kappa-B (NF-kB) pathways, leading to the mobilization of transcription factors that are critical for gene expression and essential for T cell growth and differentiation. The T cell repertoire is generated in the thymus, by V-(D)-J rearrangement. This repertoire is then shaped by intrathymic selection events to generate a peripheral T cell pool of self-MH restricted, non-autoaggressive T cells. Post-thymic interaction of alpha-beta TR with the pMH complexes shapes TR structural and functional avidity. This Homo sapiens (Human) protein is T cell receptor alpha variable 40.